The primary structure comprises 1005 residues: MSDKPKTDAAQSGNDYSKTLFLPQTEFPMRAGLPQREPELLKRWEEMDLYGKLRESARGRAKFVLHDGPPYANGNIHIGHALNKILKDVVTKSQQMLGFDSNYVPGWDCHGLPIEWKIEEENYRSKGKPKPNFKDSAAIIAFRKECRAYADKWLNVQREEFKRLGVIGDWDHPYATMNYAAEAQIARELMKFAANGTLYRGSKPVMWSVVEKTALAEAEVEYEDYTSDTVWVKFPVKTGDASTKDASVVIWTTTPWTLPGNRAISFSSKIAYGLYKVTDAPADNWAKTGDLLILADGLAESVFKQARVVAYEKVSDVGADVLKASECAHPLQGLAGGYEFTVPLLDGDHVTDDTGTGFVHTAPGHGREDFDIWMHNARALEARGISSVIPYTVDENGALTEQAPGFTGKRVINDKGEKGDANEAVIQALIARGALLARGKLKHQYPHSWRSKKPVIFRNTPQWFIAMDKDIVDDGVAKPGDTLRARALQAISVTQWVPPAGQNRINGMISGRPDWVISRQRAWGVPIAVFIKDKGDGSVEILQDEIVNQRIAEAFMQEGADAWYAEGAAERFLGDRAAEGWRKVDDILDVWFDSGSTHAFVLEDAQNFPGLAGIRRKVDGGADTVMYLEGSDQHRGWFHSSLLESCGTRGRAPYDVVLTHGFTLDEQGRKMSKSLGNTTDPAKVIASSGADILRLWVCATDYADDQRIGPEILKNVVETYRKLRNSIRWMLGTLHHYHRDEAVAFADMPELERLMLHQLAEQSATVRAAYAEFDYKTVVASLAAFMNTELSAFYFDIRKDTLYCDPPSSLARKAALTTIDIICDAILKWLAPVLSFTADEAWSMYRPDAEPSVHLTLFPLDLGEYRDDALAKKWTLIRAVRRVVTGALEVERAAKRIGSSLEASPMIYLPEAFMGDIFDVDWAEICITSNAMVEILRGNDTPPADAFRLPELADVAVVVERAQGTKCARSWKILSSVGSDAEYPDVSPRDAQALREWKALGGAAA.

A 'HIGH' region motif is present at residues 70–80 (PYANGNIHIGH). Residue Glu629 coordinates L-isoleucyl-5'-AMP. Positions 670–674 (KMSKS) match the 'KMSKS' region motif. Lys673 is a binding site for ATP.

This sequence belongs to the class-I aminoacyl-tRNA synthetase family. IleS type 1 subfamily. As to quaternary structure, monomer.

It is found in the cytoplasm. The enzyme catalyses tRNA(Ile) + L-isoleucine + ATP = L-isoleucyl-tRNA(Ile) + AMP + diphosphate. Functionally, catalyzes the attachment of isoleucine to tRNA(Ile). As IleRS can inadvertently accommodate and process structurally similar amino acids such as valine, to avoid such errors it has two additional distinct tRNA(Ile)-dependent editing activities. One activity is designated as 'pretransfer' editing and involves the hydrolysis of activated Val-AMP. The other activity is designated 'posttransfer' editing and involves deacylation of mischarged Val-tRNA(Ile). The sequence is that of Isoleucine--tRNA ligase from Rhodopseudomonas palustris (strain ATCC BAA-98 / CGA009).